Consider the following 343-residue polypeptide: DNA-directed RNA polymerase subunit alpha (343 aa).

Residues 1 to 243 (MTQEIDEKIP…EQLDIFINFD (243 aa)) form an alpha N-terminal domain (alpha-NTD) region. The tract at residues 261 to 343 (ENPYLDKPVE…NAPSDAETEE (83 aa)) is alpha C-terminal domain (alpha-CTD).

The protein belongs to the RNA polymerase alpha chain family. As to quaternary structure, homodimer. The RNAP catalytic core consists of 2 alpha, 1 beta, 1 beta' and 1 omega subunit. When a sigma factor is associated with the core the holoenzyme is formed, which can initiate transcription.

It carries out the reaction RNA(n) + a ribonucleoside 5'-triphosphate = RNA(n+1) + diphosphate. In terms of biological role, DNA-dependent RNA polymerase catalyzes the transcription of DNA into RNA using the four ribonucleoside triphosphates as substrates. This chain is DNA-directed RNA polymerase subunit alpha, found in Desulfotalea psychrophila (strain LSv54 / DSM 12343).